We begin with the raw amino-acid sequence, 338 residues long: Ketol-acid reductoisomerase (NADP(+)) (338 aa).

Residues 1-181 (MKVFYDKDCD…GGGKAGIIET (181 aa)) enclose the KARI N-terminal Rossmann domain. Residues 24–27 (YGSQ), Arg-47, and Ser-52 contribute to the NADP(+) site. His-107 is a catalytic residue. Gly-133 provides a ligand contact to NADP(+). Positions 182–327 (NFREETETDL…GKLRAMMPWI (146 aa)) constitute a KARI C-terminal knotted domain. Residues Asp-190, Glu-194, Glu-226, and Glu-230 each contribute to the Mg(2+) site. Residue Ser-251 participates in substrate binding.

It belongs to the ketol-acid reductoisomerase family. It depends on Mg(2+) as a cofactor.

It catalyses the reaction (2R)-2,3-dihydroxy-3-methylbutanoate + NADP(+) = (2S)-2-acetolactate + NADPH + H(+). It carries out the reaction (2R,3R)-2,3-dihydroxy-3-methylpentanoate + NADP(+) = (S)-2-ethyl-2-hydroxy-3-oxobutanoate + NADPH + H(+). It participates in amino-acid biosynthesis; L-isoleucine biosynthesis; L-isoleucine from 2-oxobutanoate: step 2/4. The protein operates within amino-acid biosynthesis; L-valine biosynthesis; L-valine from pyruvate: step 2/4. Its function is as follows. Involved in the biosynthesis of branched-chain amino acids (BCAA). Catalyzes an alkyl-migration followed by a ketol-acid reduction of (S)-2-acetolactate (S2AL) to yield (R)-2,3-dihydroxy-isovalerate. In the isomerase reaction, S2AL is rearranged via a Mg-dependent methyl migration to produce 3-hydroxy-3-methyl-2-ketobutyrate (HMKB). In the reductase reaction, this 2-ketoacid undergoes a metal-dependent reduction by NADPH to yield (R)-2,3-dihydroxy-isovalerate. The chain is Ketol-acid reductoisomerase (NADP(+)) from Polaromonas naphthalenivorans (strain CJ2).